Reading from the N-terminus, the 815-residue chain is Echinoderm microtubule-associated protein-like 1 (815 aa).

Positions 31 to 72 (SMEVTDRIASLEQRVQMQEDDIQLLKSALADVVRRLNITEEQ) form a coiled coil. Positions 77-179 (NRKGPTKARP…NSESKPKEPV (103 aa)) are disordered. Residues 92–101 (PLRTTVNNGT) are compositionally biased toward polar residues. Ser113 is subject to Phosphoserine. The segment covering 126–138 (TKSNIKRTSSSER) has biased composition (polar residues). The segment covering 143-153 (GRRESNGDSRG) has biased composition (basic and acidic residues). Residues 156-168 (NRTGSTSSSSSGK) are compositionally biased toward low complexity. Positions 176-815 (KEPVFSAEEG…DTSIMQWRVI (640 aa)) are tandem atypical propeller in EMLs. WD repeat units lie at residues 261–310 (EQLQ…IWDS), 315–358 (TLHV…VWDW), 363–400 (KLAD…FWTL), 409–446 (QGLF…VWGK), 450–489 (RISY…SWSG), 493–530 (KLRK…LQGT), 535–572 (FTPI…LWDA), 578–613 (VWDK…VFDT), 617–655 (DLVT…IYGV), 664–701 (RVGK…YWVP), 709–768 (SVET…LFSY), and 775–814 (APSH…QWRV).

It belongs to the WD repeat EMAP family. As to quaternary structure, homotrimer; self-association is mediated by the N-terminal coiled coil. Does not interact with EML3. Binds repolymerizing microtubules. Binds unpolymerized tubulins via its WD repeat region. Interacts with TASOR. As to expression, ubiquitous; expressed in most tissues with the exception of thymus and peripheral blood lymphocytes.

The protein localises to the cytoplasm. The protein resides in the perinuclear region. It localises to the cytoskeleton. Its function is as follows. Modulates the assembly and organization of the microtubule cytoskeleton, and probably plays a role in regulating the orientation of the mitotic spindle and the orientation of the plane of cell division. Required for normal proliferation of neuronal progenitor cells in the developing brain and for normal brain development. Does not affect neuron migration per se. The chain is Echinoderm microtubule-associated protein-like 1 (EML1) from Homo sapiens (Human).